We begin with the raw amino-acid sequence, 526 residues long: Peptide chain release factor 3 (526 aa).

The 270-residue stretch at 8 to 277 folds into the tr-type G domain; it reads GKRRTFAIIS…GLTEWAPAPQ (270 aa). GTP is bound by residues 17–24, 85–89, and 139–142; these read SHPDAGKT, DTPGH, and NKMD.

This sequence belongs to the TRAFAC class translation factor GTPase superfamily. Classic translation factor GTPase family. PrfC subfamily.

Its subcellular location is the cytoplasm. In terms of biological role, increases the formation of ribosomal termination complexes and stimulates activities of RF-1 and RF-2. It binds guanine nucleotides and has strong preference for UGA stop codons. It may interact directly with the ribosome. The stimulation of RF-1 and RF-2 is significantly reduced by GTP and GDP, but not by GMP. This is Peptide chain release factor 3 from Aliivibrio salmonicida (strain LFI1238) (Vibrio salmonicida (strain LFI1238)).